The chain runs to 260 residues: Sodium channel modifier 1 (260 aa).

The short motif at 4-20 (KRDGDDSSQLNVLKKRR) is the Bipartite nuclear localization signal element. The Matrin-type zinc-finger motif lies at 42–74 (YACTVCHHRPVFNTIDMLSVHRTGKKHLGGLQR). A disordered region spans residues 143 to 260 (RNVYDPHSGP…EEEPPALPPS (118 aa)). Residues 166 to 187 (PGPSQPHTSLHSPPTGPCSSPT) show a composition bias toward polar residues. Residues 202–221 (KGEEKFRKEIADPERERNME) are compositionally biased toward basic and acidic residues. Over residues 245 to 254 (VEFDSDEEEP) the composition is skewed to acidic residues.

Component of the minor spliceosome, which splices U12-type introns.

It is found in the nucleus. Its subcellular location is the nucleoplasm. It localises to the nucleus speckle. As a component of the minor spliceosome, involved in the splicing of U12-type introns in pre-mRNAs. This chain is Sodium channel modifier 1 (scnm1), found in Xenopus laevis (African clawed frog).